The primary structure comprises 564 residues: Quinone-dependent D-lactate dehydrogenase (564 aa).

An FAD-binding PCMH-type domain is found at 36–207; that stretch reads GTGNALAVVR…TNLQEKRYQV (172 aa). FAD is bound by residues 70 to 74, 78 to 79, glycine 137, serine 144, glycine 154, and valine 256; these read AANTG and GS.

Belongs to the quinone-dependent D-lactate dehydrogenase family. FAD serves as cofactor.

It localises to the cell inner membrane. The enzyme catalyses (R)-lactate + a quinone = a quinol + pyruvate. In terms of biological role, catalyzes the oxidation of D-lactate to pyruvate. The polypeptide is Quinone-dependent D-lactate dehydrogenase (Haemophilus influenzae (strain ATCC 51907 / DSM 11121 / KW20 / Rd)).